A 162-amino-acid chain; its full sequence is UPF0254 protein MTH1148 homolog (162 aa).

This sequence belongs to the UPF0254 family.

The protein is UPF0254 protein MTH1148 homolog of Methanothermobacter thermautotrophicus (strain Winter) (Methanobacterium thermoautotrophicum).